A 139-amino-acid polypeptide reads, in one-letter code: Nucleoside diphosphate kinase (139 aa).

ATP contacts are provided by Lys-11, Phe-59, Arg-87, Thr-93, Arg-104, and Asn-114. Catalysis depends on His-117, which acts as the Pros-phosphohistidine intermediate.

Belongs to the NDK family. As to quaternary structure, homotetramer. Mg(2+) serves as cofactor.

The protein localises to the cytoplasm. It carries out the reaction a 2'-deoxyribonucleoside 5'-diphosphate + ATP = a 2'-deoxyribonucleoside 5'-triphosphate + ADP. It catalyses the reaction a ribonucleoside 5'-diphosphate + ATP = a ribonucleoside 5'-triphosphate + ADP. Major role in the synthesis of nucleoside triphosphates other than ATP. The ATP gamma phosphate is transferred to the NDP beta phosphate via a ping-pong mechanism, using a phosphorylated active-site intermediate. The chain is Nucleoside diphosphate kinase from Moorella thermoacetica (strain ATCC 39073 / JCM 9320).